A 106-amino-acid polypeptide reads, in one-letter code: Cytochrome c oxidase assembly protein COX16 homolog, mitochondrial (106 aa).

At 1-15 (MIAPAVLRALRKNKT) the chain is on the mitochondrial matrix side. Residues 16–33 (LRYGVPMLLLVVGGSFGL) form a helical membrane-spanning segment. Residues 34 to 106 (REFSQIRYDA…NPETLKPKTT (73 aa)) lie on the Mitochondrial intermembrane side of the membrane. The interval 81 to 106 (IRGPRPWEDPQLLQGRNPETLKPKTT) is disordered.

This sequence belongs to the COX16 family. As to quaternary structure, associates with the MITRAC complex. Interacts with MT-CO2/COX; specifically interacts with newly synthesized MT-CO2/COX. Interacts with SCO1, SCO2 and COA6.

It localises to the mitochondrion inner membrane. Its function is as follows. Required for the assembly of the mitochondrial respiratory chain complex IV (CIV), also known as cytochrome c oxidase. Promotes the insertion of copper into the active site of cytochrome c oxidase subunit II (MT-CO2/COX2). Interacts specifically with newly synthesized MT-CO2/COX and its copper center-forming metallochaperones SCO1, SCO2 and COA6. Probably facilitates MT-CO2/COX2 association with the MITRAC assembly intermediate containing MT-CO1/COX1, thereby participating in merging the MT-CO1/COX1 and MT-CO2/COX2 assembly lines. In Mus musculus (Mouse), this protein is Cytochrome c oxidase assembly protein COX16 homolog, mitochondrial.